The sequence spans 140 residues: Sex-regulated protein janus-B (140 aa).

Residue arginine 42 coordinates substrate. The Proton acceptor role is filled by histidine 69. 110–112 (SRT) serves as a coordination point for substrate.

It belongs to the janus family.

Functionally, janA and janB regulate somatic sex differentiation. This is Sex-regulated protein janus-B (janB) from Drosophila yakuba (Fruit fly).